We begin with the raw amino-acid sequence, 416 residues long: 2-aminoadipate transaminase (416 aa).

Pyridoxal 5'-phosphate contacts are provided by residues 102–103 and Gln-233; that span reads GA. N6-(pyridoxal phosphate)lysine is present on Lys-259. Thr-288 serves as a coordination point for pyridoxal 5'-phosphate.

Belongs to the class-III pyridoxal-phosphate-dependent aminotransferase family. It depends on pyridoxal 5'-phosphate as a cofactor.

The enzyme catalyses L-2-aminoadipate + 2-oxoglutarate = 2-oxoadipate + L-glutamate. It catalyses the reaction 5-aminopentanoate + 2-oxoglutarate = 5-oxopentanoate + L-glutamate. It participates in amino-acid degradation. In terms of biological role, catalyzes the conversion of 2-aminoadipate (2AA) to 2-oxoadipate (2OA). Is most active on L-2-aminoadipate (L-2AA) and shows only weak activity on the enantiomer, D-2-aminoadipate (D-2AA). Shows moderate activity on 5-aminovalerate (5AVA) and weak activity toward 4-aminobutyrate (GABA). Is involved in a D-lysine catabolic pathway. In Pseudomonas putida (strain ATCC 47054 / DSM 6125 / CFBP 8728 / NCIMB 11950 / KT2440), this protein is 2-aminoadipate transaminase.